Consider the following 925-residue polypeptide: Aspulvinone E synthetase melA (925 aa).

The segment at 11–434 is adenylation (A) domain; it reads ETAAARNGDG…GGRAKETIII (424 aa). The Carrier domain occupies 564-644; that stretch reads SPKNDFEKGL…ELAAALDNLY (81 aa). O-(pantetheine 4'-phosphoryl)serine is present on Ser-601. The interval 663–923 is thioesterase (TE) domain; sequence PLWLVHPGAG…KILRSALAER (261 aa).

This sequence belongs to the ATP-dependent AMP-binding enzyme family.

Its subcellular location is the cytoplasm. In terms of biological role, nonribosomal peptide synthase; part of the gene cluster that mediates the biosynthesis of Asp-melanin, a pigment that confers resistance against UV light and hampers phagocytosis by soil amoeba. The nonribosomal peptide synthase melA converts 4-hydroxyphenylpyruvate (4-HPPA) to aspulvinone E. The tyrosinase tyrP then performs hydroxylations of both aromatic moieties of aspulvinone E. The product of tyrP is highly unstable, and, due to the high reactivity of methides and ortho-diquinones, the polymeric Asp-melanin forms spontaneously. This is Aspulvinone E synthetase melA from Aspergillus terreus.